The chain runs to 433 residues: MLDIQLLRKDLDGVAKRLADRGYPLDVAAFSALEAERRAIQTRTEELQARRNSLSKQIGAMKGRGEDTSAVMAEVGGIGDEMKASAVKLDEIQARLSELMLEMPNVPHESVPVGRDETENVEVRRWGAPRQFDFDVKDHVDVGTPLGLDFETGAKLSGARFTVLRGPIARLHRALAQFMLDTHTQQHGYSETYTPYIVNPDVLYGTGQLPKFAEDMFRVEKGGAENTVTQYLISTSEISLTNTVRDSIIEASALPIKLTAHSPCFRSEAGSYGRDTRGMIRQHQFDKVEMVQIVAPEASYAALDEMVGHAEAILQKLELPYRVVALCTGDMGFSAAKTFDLEVWLPAQNTYREISSCSNTESFQARRMQARFRNAQGKPELVHTLNGSGLAVGRTLVAVLENYQNADGSVTVPVALRPYMGGVERIDAPSSAA.

L-serine is bound at residue 235–237 (TSE). An ATP-binding site is contributed by 266 to 268 (RSE). Residue E289 participates in L-serine binding. An ATP-binding site is contributed by 353 to 356 (EISS). An L-serine-binding site is contributed by S388.

The protein belongs to the class-II aminoacyl-tRNA synthetase family. Type-1 seryl-tRNA synthetase subfamily. Homodimer. The tRNA molecule binds across the dimer.

It is found in the cytoplasm. It catalyses the reaction tRNA(Ser) + L-serine + ATP = L-seryl-tRNA(Ser) + AMP + diphosphate + H(+). The catalysed reaction is tRNA(Sec) + L-serine + ATP = L-seryl-tRNA(Sec) + AMP + diphosphate + H(+). Its pathway is aminoacyl-tRNA biosynthesis; selenocysteinyl-tRNA(Sec) biosynthesis; L-seryl-tRNA(Sec) from L-serine and tRNA(Sec): step 1/1. Its function is as follows. Catalyzes the attachment of serine to tRNA(Ser). Is also able to aminoacylate tRNA(Sec) with serine, to form the misacylated tRNA L-seryl-tRNA(Sec), which will be further converted into selenocysteinyl-tRNA(Sec). In Burkholderia pseudomallei (strain 668), this protein is Serine--tRNA ligase.